Here is a 369-residue protein sequence, read N- to C-terminus: 3-isopropylmalate dehydrogenase (369 aa).

Positions 98, 108, 136, and 227 each coordinate substrate. 3 residues coordinate Mg(2+): D227, D251, and D255. 290–302 (GSAPDIAGKGIAN) provides a ligand contact to NAD(+).

It belongs to the isocitrate and isopropylmalate dehydrogenases family. LeuB type 1 subfamily. In terms of assembly, homodimer. The cofactor is Mg(2+). Mn(2+) serves as cofactor.

Its subcellular location is the cytoplasm. It carries out the reaction (2R,3S)-3-isopropylmalate + NAD(+) = 4-methyl-2-oxopentanoate + CO2 + NADH. It functions in the pathway amino-acid biosynthesis; L-leucine biosynthesis; L-leucine from 3-methyl-2-oxobutanoate: step 3/4. Functionally, catalyzes the oxidation of 3-carboxy-2-hydroxy-4-methylpentanoate (3-isopropylmalate) to 3-carboxy-4-methyl-2-oxopentanoate. The product decarboxylates to 4-methyl-2 oxopentanoate. In Gluconobacter oxydans (strain 621H) (Gluconobacter suboxydans), this protein is 3-isopropylmalate dehydrogenase.